Reading from the N-terminus, the 85-residue chain is Phosphocarrier protein HPr (85 aa).

The region spanning 1 to 85 (MYSKDVEIIA…HLVALIPTLE (85 aa)) is the HPr domain. His15 functions as the Pros-phosphohistidine intermediate in the catalytic mechanism.

It belongs to the HPr family.

The protein resides in the cytoplasm. Functionally, general (non sugar-specific) component of the phosphoenolpyruvate-dependent sugar phosphotransferase system (sugar PTS). This major carbohydrate active-transport system catalyzes the phosphorylation of incoming sugar substrates concomitantly with their translocation across the cell membrane. The phosphoryl group from phosphoenolpyruvate (PEP) is transferred to the phosphoryl carrier protein HPr by enzyme I. Phospho-HPr then transfers it to the PTS EIIA domain. The polypeptide is Phosphocarrier protein HPr (ptsH) (Haemophilus influenzae (strain ATCC 51907 / DSM 11121 / KW20 / Rd)).